The chain runs to 387 residues: NifS-like protein (387 aa).

Pyridoxal 5'-phosphate-binding positions include 58-59 and 184-186; these read SE and SIN.

The protein belongs to the class-V pyridoxal-phosphate-dependent aminotransferase family. NifS/IscS subfamily. It depends on pyridoxal 5'-phosphate as a cofactor.

It is found in the virion. The polypeptide is NifS-like protein (African swine fever virus (isolate Tick/South Africa/Pretoriuskop Pr4/1996) (ASFV)).